Here is a 135-residue protein sequence, read N- to C-terminus: Single-stranded DNA-binding protein RIM1, mitochondrial (135 aa).

The transit peptide at 1 to 17 directs the protein to the mitochondrion; the sequence is MFLRTQARFFHATTKKM. Positions 19–117 constitute an SSB domain; sequence FSKMSIVGRI…LVQKDINLLK (99 aa).

Homotetramer. Interacts with PIF1.

Its subcellular location is the mitochondrion. Its function is as follows. This protein binds preferentially and cooperatively to single-stranded DNA (ssDNS). Involved in mitochondrial DNA replication. Stimulates PIF1 helicase activity. The chain is Single-stranded DNA-binding protein RIM1, mitochondrial (RIM1) from Saccharomyces cerevisiae (strain ATCC 204508 / S288c) (Baker's yeast).